A 174-amino-acid polypeptide reads, in one-letter code: NADH-ubiquinone oxidoreductase chain 6 (174 aa).

The next 5 membrane-spanning stretches (helical) occupy residues 1–21, 24–44, 47–67, 86–106, and 151–171; these read MTYT…GFSS, SPIY…AVIL, GGGY…MVVF, VEVL…VLWA, and WLVV…IEIA.

It belongs to the complex I subunit 6 family. As to quaternary structure, core subunit of respiratory chain NADH dehydrogenase (Complex I) which is composed of 45 different subunits.

It localises to the mitochondrion inner membrane. It carries out the reaction a ubiquinone + NADH + 5 H(+)(in) = a ubiquinol + NAD(+) + 4 H(+)(out). Its function is as follows. Core subunit of the mitochondrial membrane respiratory chain NADH dehydrogenase (Complex I) which catalyzes electron transfer from NADH through the respiratory chain, using ubiquinone as an electron acceptor. Essential for the catalytic activity and assembly of complex I. This is NADH-ubiquinone oxidoreductase chain 6 (MT-ND6) from Hylobates lar (Lar gibbon).